A 265-amino-acid chain; its full sequence is MNSPIDPALVMPDVQSSADTRHIPIQRVGIRGVRHPMLVAGADGAPQPTVANWTLTVALPAEEKGTHMSRFVALLEKYRSVPMTPALFAAMARDMLPLLHAERGDITAAFPYFINKSAPVSGVQSLLDYEVQWIARAAGDQVEFELVVQVPVTSLCPCSKAISEYGAHNQRSHVTVSVVLNGDLAMDRIIRLVEDEGSCELWGLLKRPDEKFVTERAYDNPKFVEDLVRDVAARLAAHPGVARYRVEAENFESIHNHSAYAVVEG.

Belongs to the GTP cyclohydrolase IV family.

The enzyme catalyses GTP + H2O = 7,8-dihydroneopterin 3'-triphosphate + formate + H(+). The protein operates within cofactor biosynthesis; 7,8-dihydroneopterin triphosphate biosynthesis; 7,8-dihydroneopterin triphosphate from GTP: step 1/1. Converts GTP to 7,8-dihydroneopterin triphosphate. In Bordetella petrii (strain ATCC BAA-461 / DSM 12804 / CCUG 43448), this protein is GTP cyclohydrolase FolE2.